Consider the following 339-residue polypeptide: Glyceraldehyde-3-phosphate dehydrogenase (339 aa).

Residues 12-13 (RI), aspartate 39, arginine 84, and serine 127 each bind NAD(+). Residues 157–159 (SCT), threonine 188, arginine 203, 216–217 (TG), and arginine 239 contribute to the D-glyceraldehyde 3-phosphate site. Catalysis depends on cysteine 158, which acts as the Nucleophile. Asparagine 320 is a binding site for NAD(+).

This sequence belongs to the glyceraldehyde-3-phosphate dehydrogenase family. As to quaternary structure, homotetramer.

The protein localises to the cytoplasm. It catalyses the reaction D-glyceraldehyde 3-phosphate + phosphate + NAD(+) = (2R)-3-phospho-glyceroyl phosphate + NADH + H(+). Its pathway is carbohydrate degradation; glycolysis; pyruvate from D-glyceraldehyde 3-phosphate: step 1/5. Its function is as follows. Catalyzes the oxidative phosphorylation of glyceraldehyde 3-phosphate (G3P) to 1,3-bisphosphoglycerate (BPG) using the cofactor NAD. The first reaction step involves the formation of a hemiacetal intermediate between G3P and a cysteine residue, and this hemiacetal intermediate is then oxidized to a thioester, with concomitant reduction of NAD to NADH. The reduced NADH is then exchanged with the second NAD, and the thioester is attacked by a nucleophilic inorganic phosphate to produce BPG. In Mycobacterium avium, this protein is Glyceraldehyde-3-phosphate dehydrogenase (gapA).